Consider the following 299-residue polypeptide: MSKHVVETDIKELKLLSRGKVRDIYEVDDDKLLLVTTDRISAYDVIMPNPIDDKGKILNQITLFWMDMFKDIIPNHLIASKVDDYPEVLHKYRDQLEGRSVLVKKAKPLPIECIVRGYITGSGWKDYQKTGEVCGHKLPEGLKESEMLEQPLFTPSTKAELGEHDENISVEKATEMLGKELFDKVQEATLSIYKRGRDYAREKGIIIADTKFEFGIYDGELIIIDEVLTPDSSRFWPVEGYEAGKSQPSFDKQFLRDWLTEINFNKQPPAPEVPEEIATKTRDKYMEAFTLLTESELDA.

This sequence belongs to the SAICAR synthetase family.

The enzyme catalyses 5-amino-1-(5-phospho-D-ribosyl)imidazole-4-carboxylate + L-aspartate + ATP = (2S)-2-[5-amino-1-(5-phospho-beta-D-ribosyl)imidazole-4-carboxamido]succinate + ADP + phosphate + 2 H(+). The protein operates within purine metabolism; IMP biosynthesis via de novo pathway; 5-amino-1-(5-phospho-D-ribosyl)imidazole-4-carboxamide from 5-amino-1-(5-phospho-D-ribosyl)imidazole-4-carboxylate: step 1/2. This Maridesulfovibrio salexigens (strain ATCC 14822 / DSM 2638 / NCIMB 8403 / VKM B-1763) (Desulfovibrio salexigens) protein is Phosphoribosylaminoimidazole-succinocarboxamide synthase.